A 254-amino-acid polypeptide reads, in one-letter code: Isoprenyl transferase (254 aa).

The active site involves Asp-12. Residue Asp-12 coordinates Mg(2+). Substrate is bound by residues 13 to 16, Trp-17, Arg-25, His-29, and 57 to 59; these read GNGR and SSE. Asn-60 acts as the Proton acceptor in catalysis. Residues Trp-61, Arg-63, Arg-180, and 186-188 each bind substrate; that span reads RLS. Glu-199 contributes to the Mg(2+) binding site.

The protein belongs to the UPP synthase family. In terms of assembly, homodimer. Mg(2+) is required as a cofactor.

In terms of biological role, catalyzes the condensation of isopentenyl diphosphate (IPP) with allylic pyrophosphates generating different type of terpenoids. This is Isoprenyl transferase from Brucella suis biovar 1 (strain 1330).